Reading from the N-terminus, the 357-residue chain is Peptide chain release factor 1 (357 aa).

Gln-234 is subject to N5-methylglutamine.

This sequence belongs to the prokaryotic/mitochondrial release factor family. Post-translationally, methylated by PrmC. Methylation increases the termination efficiency of RF1.

It is found in the cytoplasm. Functionally, peptide chain release factor 1 directs the termination of translation in response to the peptide chain termination codons UAG and UAA. This chain is Peptide chain release factor 1, found in Alkaliphilus oremlandii (strain OhILAs) (Clostridium oremlandii (strain OhILAs)).